Reading from the N-terminus, the 449-residue chain is Na(+)-translocating NADH-quinone reductase subunit A (449 aa).

This sequence belongs to the NqrA family. As to quaternary structure, composed of six subunits; NqrA, NqrB, NqrC, NqrD, NqrE and NqrF.

It carries out the reaction a ubiquinone + n Na(+)(in) + NADH + H(+) = a ubiquinol + n Na(+)(out) + NAD(+). In terms of biological role, NQR complex catalyzes the reduction of ubiquinone-1 to ubiquinol by two successive reactions, coupled with the transport of Na(+) ions from the cytoplasm to the periplasm. NqrA to NqrE are probably involved in the second step, the conversion of ubisemiquinone to ubiquinol. This chain is Na(+)-translocating NADH-quinone reductase subunit A, found in Actinobacillus pleuropneumoniae serotype 3 (strain JL03).